A 94-amino-acid chain; its full sequence is DASH complex subunit DAD5 (94 aa).

The span at methionine 1–serine 20 shows a compositional bias: low complexity. Residues methionine 1–phenylalanine 25 form a disordered region.

Belongs to the DASH complex HSK3 family. In terms of assembly, component of the DASH complex consisting of ask1, dad1, dad2, dad3, dad4, dam1, duo1, dad5, spc19 and spc34, with a stoichiometry of one copy of each subunit per complex. Multiple DASH complexes oligomerize to form a ring that encircles spindle microtubules and organizes the rod-like NDC80 complexes of the outer kinetochore. DASH complex oligomerization strengthens microtubule attachments. On cytoplasmic microtubules, DASH complexes appear to form patches instead of rings.

It is found in the nucleus. It localises to the cytoplasm. The protein localises to the cytoskeleton. The protein resides in the spindle. Its subcellular location is the chromosome. It is found in the centromere. It localises to the kinetochore. Functionally, component of the DASH complex that connects microtubules with kinetochores and couples microtubule depolymerisation to chromosome movement; it is involved in retrieving kinetochores to the spindle poles before their re-orientation on the spindle in early mitosis and allows microtubule depolymerization to pull chromosomes apart and resist detachment during anaphase. Kinetochores, consisting of a centromere-associated inner segment and a microtubule-contacting outer segment, play a crucial role in chromosome segregation by mediating the physical connection between centromeric DNA and microtubules. Kinetochores also serve as an input point for the spindle assembly checkpoint, which delays anaphase until all chromosomes have bioriented on the mitotic spindle. The DASH complex mediates bipolar kinetochore-microtubule attachments and facilitates the formation of additional interactions between outer kinetochore components and spindle microtubules. During chromosome movement along the microtubule, it is required both for the sliding of kinetochores along the lateral side of the microtubule and also for microtubule end-on pulling on the kinetochore. Modulates cytoplasmic microtubule dynamics by tracking the plus-end of shortening microtubules and slowing their depolymerization. This chain is DASH complex subunit DAD5, found in Schizosaccharomyces pombe (strain 972 / ATCC 24843) (Fission yeast).